Reading from the N-terminus, the 351-residue chain is SLAM family member 6 (351 aa).

Positions 1–30 (MAVSRAPAPDSACQRMVWLFPLVFCLGSGS) are cleaved as a signal peptide. The Extracellular portion of the chain corresponds to 31–239 (EVSQSSSDPQ…KGVLTNPPWN (209 aa)). The region spanning 36–130 (SSDPQLMNGV…YTAQITTKDS (95 aa)) is the Ig-like V-type domain. Residues asparagine 82, asparagine 101, asparagine 112, asparagine 152, asparagine 159, asparagine 172, asparagine 186, asparagine 193, and asparagine 218 are each glycosylated (N-linked (GlcNAc...) asparagine). Positions 147-210 (NLETTNYTLL…RNSGDQTYVC (64 aa)) constitute an Ig-like C2-type domain. 2 cysteine pairs are disulfide-bonded: cysteine 162–cysteine 229 and cysteine 168–cysteine 210. Residues 240–262 (AVWFMTTISIISAVILIFVCWSI) traverse the membrane as a helical segment. The Cytoplasmic segment spans residues 263–351 (HVWKRRGSLP…KVNTLINYNS (89 aa)). Residues 272–295 (PLTSQHPESSQSTDGPGSPGNTVY) are disordered. 2 consecutive short sequence motifs (ITSM) follow at residues 293–298 (TVYAQV) and 317–322 (TIYSIV). The residue at position 319 (tyrosine 319) is a Phosphotyrosine.

As to quaternary structure, homodimer. Interacts with PTN6 and, upon phosphorylation, with PTN11 and SH2D1A/SAP. Phosphorylated. In terms of tissue distribution, expressed on hematopoietic cells. Isoform 3 is expressed in thymocytes and B lymphocytes of C57Bl/6 strain.

It is found in the cell membrane. Functionally, self-ligand receptor of the signaling lymphocytic activation molecule (SLAM) family. SLAM receptors triggered by homo- or heterotypic cell-cell interactions are modulating the activation and differentiation of a wide variety of immune cells and thus are involved in the regulation and interconnection of both innate and adaptive immune response. Activities are controlled by presence or absence of small cytoplasmic adapter proteins, SH2D1A/SAP and/or SH2D1B/EAT-2. Triggers cytolytic activity only in natural killer cells (NK) expressing high surface densities of natural cytotoxicity receptors. Positive signaling in NK cells implicates phosphorylation of VAV1. NK cell activation seems to depend on SH2D1B and not on SH2D1A. In conjunction with SLAMF1 controls the transition between positive selection and the subsequent expansion and differentiation of the thymocytic natural killer T (NKT) cell lineage. Promotes T cell differentiation into a helper T-cell Th17 phenotype leading to increased IL-17 secretion; the costimulatory activity requires SH2D1A. Promotes recruitment of RORC to the IL-17 promoter. In conjunction with SLAMF1 and CD84/SLAMF5 may be a negative regulator of the humoral immune response. In the absence of SH2D1A/SAP can transmit negative signals to CD4(+) T-cells and NKT cells. Negatively regulates germinal center formation by inhibiting T-cell:B-cell adhesion; the function probably implicates increased association with PTPN6/SHP-1 via ITSMs in absence of SH2D1A/SAP. However, reported to mediated T-cell adhesion, to participate in stable T-cell:B-cell interactions and to be involved in maintaining B-cell tolerance in germinal centers and in preventing autoimmunity. Involved in regulation of autoimmunity. Isoform 3 may be suppressor of pathogenic T-cell proliferation. This chain is SLAM family member 6 (Slamf6), found in Mus musculus (Mouse).